The chain runs to 106 residues: PAT complex subunit Asterix (106 aa).

Residues 1 to 10 show a composition bias toward polar residues; it reads MSANSMSDPR. The tract at residues 1–29 is disordered; it reads MSANSMSDPRSPNKVLRYKPPPSECNPAL. Ser-2 carries the N-acetylserine modification. The Cytoplasmic portion of the chain corresponds to 2-32; that stretch reads SANSMSDPRSPNKVLRYKPPPSECNPALDDP. A helical membrane pass occupies residues 33–51; sequence TPDYMNLLGMIFSMCGLML. Lys-52 is a topological domain (lumenal). A helical transmembrane segment spans residues 53 to 70; it reads LKWCAWVAVYCSFISFAN. Residues 71–74 lie on the Cytoplasmic side of the membrane; the sequence is SRSS. A helical membrane pass occupies residues 75–95; it reads EDTKQMMSSFMLSISAVVMSY. Topologically, residues 96-106 are lumenal; sequence LQNPQPMTPPW.

The protein belongs to the Asterix family. Component of the PAT complex, composed of WDR83OS/Asterix and CCDC47. The PAT complex is part of the multi-pass translocon (MPT) complex, composed of three subcomplexes, the GEL complex (composed of RAB5IF/OPTI and TMCO1), the BOS complex (composed of NCLN/Nicalin, NOMO1 and TMEM147) and the PAT complex (composed of WDR83OS/Asterix and CCDC47). The MPT complex associates with the SEC61 complex.

It localises to the endoplasmic reticulum membrane. Its function is as follows. Component of the multi-pass translocon (MPT) complex that mediates insertion of multi-pass membrane proteins into the lipid bilayer of membranes. The MPT complex takes over after the SEC61 complex: following membrane insertion of the first few transmembrane segments of proteins by the SEC61 complex, the MPT complex occludes the lateral gate of the SEC61 complex to promote insertion of subsequent transmembrane regions. Within the MPT complex, the PAT subcomplex sequesters any highly polar regions in the transmembrane domains away from the non-polar membrane environment until they can be buried in the interior of the fully assembled protein. Within the PAT subcomplex, WDR83OS/Asterix binds to and redirects the substrate to a location behind the SEC61 complex. The sequence is that of PAT complex subunit Asterix (WDR83OS) from Sus scrofa (Pig).